Reading from the N-terminus, the 387-residue chain is UDP-N-acetylglucosamine--N-acetylmuramyl-(pentapeptide) pyrophosphoryl-undecaprenol N-acetylglucosamine transferase (387 aa).

Residues 14–16, Asn124, Arg167, Ser195, and Gln296 each bind UDP-N-acetyl-alpha-D-glucosamine; that span reads TGG. The disordered stretch occupies residues 366 to 387; sequence LPQQNSIEEDSTFEKNQEGAVA. A compositionally biased stretch (basic and acidic residues) spans 377–387; sequence TFEKNQEGAVA.

Belongs to the glycosyltransferase 28 family. MurG subfamily.

The protein localises to the cell inner membrane. The enzyme catalyses di-trans,octa-cis-undecaprenyl diphospho-N-acetyl-alpha-D-muramoyl-L-alanyl-D-glutamyl-meso-2,6-diaminopimeloyl-D-alanyl-D-alanine + UDP-N-acetyl-alpha-D-glucosamine = di-trans,octa-cis-undecaprenyl diphospho-[N-acetyl-alpha-D-glucosaminyl-(1-&gt;4)]-N-acetyl-alpha-D-muramoyl-L-alanyl-D-glutamyl-meso-2,6-diaminopimeloyl-D-alanyl-D-alanine + UDP + H(+). It functions in the pathway cell wall biogenesis; peptidoglycan biosynthesis. Its function is as follows. Cell wall formation. Catalyzes the transfer of a GlcNAc subunit on undecaprenyl-pyrophosphoryl-MurNAc-pentapeptide (lipid intermediate I) to form undecaprenyl-pyrophosphoryl-MurNAc-(pentapeptide)GlcNAc (lipid intermediate II). The polypeptide is UDP-N-acetylglucosamine--N-acetylmuramyl-(pentapeptide) pyrophosphoryl-undecaprenol N-acetylglucosamine transferase (Zymomonas mobilis subsp. mobilis (strain ATCC 31821 / ZM4 / CP4)).